Consider the following 395-residue polypeptide: Axin-like protein 1 (395 aa).

Residues 4 to 132 (RSKTFSDRIL…TTTADVSNTW (129 aa)) form the RGS domain. The disordered stretch occupies residues 190–230 (QETKNSSETEEEKKKERSADPYGSDGFAPPPQSTQTHTLRN). Positions 194–208 (NSSETEEEKKKERSA) are enriched in basic and acidic residues. A DIX domain is found at 301–386 (EIQKLTVELR…RITAICRMCP (86 aa)).

In terms of assembly, interacts with bar-1, dsh-2, gsk-3, and mig-5.

In terms of biological role, works in parallel with pry-1 in negatively regulating bar-1 signaling in vulval precursor cells and Q neuroblasts. Shown to have a role in excretory cell development. The sequence is that of Axin-like protein 1 (axl-1) from Caenorhabditis briggsae.